Here is a 436-residue protein sequence, read N- to C-terminus: Protein VHS2 (436 aa).

Residues 1-34 (MDTSNHNQDHDSHVAAQRENDNNYMPPSPSMSES) are disordered. The span at 7-21 (NQDHDSHVAAQREND) shows a compositional bias: basic and acidic residues. A phosphoserine mark is found at Ser53, Ser61, Ser102, and Ser172. Disordered regions lie at residues 165 to 195 (RALG…DHGS), 211 to 266 (NNNN…HMNF), 282 to 360 (NNAN…EEDN), and 389 to 436 (NDNH…DTTK). Positions 171 to 183 (RSLSSQSFDNETS) are enriched in polar residues. Composition is skewed to low complexity over residues 211 to 226 (NNNN…STAN), 238 to 261 (SFSS…ASPP), and 282 to 299 (NNAN…AALS). Ser299, Ser301, Ser303, and Ser325 each carry phosphoserine. Positions 300–312 (RSPSNQQYLLKQQ) are enriched in polar residues. Residues 401 to 436 (TINNNIKNSPAFTNSNPSSKSNSNSTITSMNPDTTK) are compositionally biased toward low complexity.

The protein to yeast MFL3.

The protein resides in the cytoplasm. Can suppress the synthetic lethality of the hal3 sit4 double mutation when overexpressed, suggesting that it is involved in the G1-S transition. This is Protein VHS2 (VHS2) from Saccharomyces cerevisiae (strain ATCC 204508 / S288c) (Baker's yeast).